A 344-amino-acid polypeptide reads, in one-letter code: Dihydroorotate dehydrogenase (quinone) (344 aa).

Residues 65-69 (AGLDK) and Thr-89 each bind FMN. Lys-69 contacts substrate. 114–118 (NRLGF) contacts substrate. FMN contacts are provided by Asn-145 and Asn-178. Residue Asn-178 coordinates substrate. Ser-181 serves as the catalytic Nucleophile. Asn-183 contacts substrate. Lys-223 and Thr-251 together coordinate FMN. Position 252 to 253 (252 to 253 (NT)) interacts with substrate. Residues Gly-274, Gly-303, and 324 to 325 (YT) contribute to the FMN site.

This sequence belongs to the dihydroorotate dehydrogenase family. Type 2 subfamily. Monomer. FMN is required as a cofactor.

Its subcellular location is the cell membrane. It carries out the reaction (S)-dihydroorotate + a quinone = orotate + a quinol. It functions in the pathway pyrimidine metabolism; UMP biosynthesis via de novo pathway; orotate from (S)-dihydroorotate (quinone route): step 1/1. Functionally, catalyzes the conversion of dihydroorotate to orotate with quinone as electron acceptor. This is Dihydroorotate dehydrogenase (quinone) from Methylibium petroleiphilum (strain ATCC BAA-1232 / LMG 22953 / PM1).